Here is a 242-residue protein sequence, read N- to C-terminus: MTTLFISDLHLTPSRPDITECFITFMRTEAKNAEALYVLGDLFEFWVGDDDKTPFANQIRTEFKALTDQGVPVFFIQGNRDFLLGERFCKETGITLLDDVCTIDLYGTKAVILHGDTLCIDDVEYQKFRKTVHQPWLQWIFKRIPWYLKKKIVSKVQSDIRDDKQMKSLDIMDVNQSEVEKVMSQNCVNLMIHGHTHRPNTHFFDANGAKNTRIVLGDWYTQGSVLQVNSDGFELQNRPFNT.

The Mn(2+) site is built by D8, H10, D41, N79, and H114. Position 79 to 80 (79 to 80 (NR)) interacts with substrate. D122, K164, K167, and H195 together coordinate substrate. Mn(2+) contacts are provided by H195 and H197.

The protein belongs to the LpxH family. The cofactor is Mn(2+).

Its subcellular location is the cell inner membrane. The enzyme catalyses UDP-2-N,3-O-bis[(3R)-3-hydroxytetradecanoyl]-alpha-D-glucosamine + H2O = 2-N,3-O-bis[(3R)-3-hydroxytetradecanoyl]-alpha-D-glucosaminyl 1-phosphate + UMP + 2 H(+). Its pathway is glycolipid biosynthesis; lipid IV(A) biosynthesis; lipid IV(A) from (3R)-3-hydroxytetradecanoyl-[acyl-carrier-protein] and UDP-N-acetyl-alpha-D-glucosamine: step 4/6. Its function is as follows. Hydrolyzes the pyrophosphate bond of UDP-2,3-diacylglucosamine to yield 2,3-diacylglucosamine 1-phosphate (lipid X) and UMP by catalyzing the attack of water at the alpha-P atom. Involved in the biosynthesis of lipid A, a phosphorylated glycolipid that anchors the lipopolysaccharide to the outer membrane of the cell. The polypeptide is UDP-2,3-diacylglucosamine hydrolase (Vibrio parahaemolyticus serotype O3:K6 (strain RIMD 2210633)).